We begin with the raw amino-acid sequence, 365 residues long: UDP-N-acetylglucosamine--N-acetylmuramyl-(pentapeptide) pyrophosphoryl-undecaprenol N-acetylglucosamine transferase (365 aa).

Residues 17 to 19 (TGG), N129, R167, S194, I250, 269 to 274 (ALTVSE), and Q295 each bind UDP-N-acetyl-alpha-D-glucosamine.

Belongs to the glycosyltransferase 28 family. MurG subfamily.

The protein resides in the cell inner membrane. It catalyses the reaction di-trans,octa-cis-undecaprenyl diphospho-N-acetyl-alpha-D-muramoyl-L-alanyl-D-glutamyl-meso-2,6-diaminopimeloyl-D-alanyl-D-alanine + UDP-N-acetyl-alpha-D-glucosamine = di-trans,octa-cis-undecaprenyl diphospho-[N-acetyl-alpha-D-glucosaminyl-(1-&gt;4)]-N-acetyl-alpha-D-muramoyl-L-alanyl-D-glutamyl-meso-2,6-diaminopimeloyl-D-alanyl-D-alanine + UDP + H(+). Its pathway is cell wall biogenesis; peptidoglycan biosynthesis. Functionally, cell wall formation. Catalyzes the transfer of a GlcNAc subunit on undecaprenyl-pyrophosphoryl-MurNAc-pentapeptide (lipid intermediate I) to form undecaprenyl-pyrophosphoryl-MurNAc-(pentapeptide)GlcNAc (lipid intermediate II). The protein is UDP-N-acetylglucosamine--N-acetylmuramyl-(pentapeptide) pyrophosphoryl-undecaprenol N-acetylglucosamine transferase of Shewanella woodyi (strain ATCC 51908 / MS32).